Here is a 255-residue protein sequence, read N- to C-terminus: Triosephosphate isomerase (255 aa).

Position 9–11 (9–11) interacts with substrate; it reads NWK. The active-site Electrophile is the H95. E167 acts as the Proton acceptor in catalysis. Substrate contacts are provided by residues G173, S212, and 233-234; that span reads GG.

Belongs to the triosephosphate isomerase family. As to quaternary structure, homodimer.

It is found in the cytoplasm. The catalysed reaction is D-glyceraldehyde 3-phosphate = dihydroxyacetone phosphate. It functions in the pathway carbohydrate biosynthesis; gluconeogenesis. The protein operates within carbohydrate degradation; glycolysis; D-glyceraldehyde 3-phosphate from glycerone phosphate: step 1/1. Involved in the gluconeogenesis. Catalyzes stereospecifically the conversion of dihydroxyacetone phosphate (DHAP) to D-glyceraldehyde-3-phosphate (G3P). The sequence is that of Triosephosphate isomerase from Enterobacter cloacae.